We begin with the raw amino-acid sequence, 469 residues long: Cysteine protease ATG4D (469 aa).

Residues methionine 1 to glycine 29 are compositionally biased toward polar residues. Residues methionine 1–threonine 41 form a disordered region. The active-site Nucleophile is the cysteine 131. Residues isoleucine 169 to tyrosine 191 form a disordered region. The segment covering serine 171–leucine 182 has biased composition (low complexity). Catalysis depends on residues aspartate 356 and histidine 358. The disordered stretch occupies residues glutamine 436–leucine 469.

The protein belongs to the peptidase C54 family.

The protein resides in the cytoplasm. It carries out the reaction [protein]-C-terminal L-amino acid-glycyl-phosphatidylethanolamide + H2O = [protein]-C-terminal L-amino acid-glycine + a 1,2-diacyl-sn-glycero-3-phosphoethanolamine. It catalyses the reaction [protein]-C-terminal L-amino acid-glycyl-phosphatidylserine + H2O = [protein]-C-terminal L-amino acid-glycine + a 1,2-diacyl-sn-glycero-3-phospho-L-serine. In terms of biological role, cysteine protease that plays a key role in autophagy by mediating both proteolytic activation and delipidation of ATG8 family proteins. The protease activity is required for proteolytic activation of ATG8 family proteins to reveal a C-terminal glycine. Exposure of the glycine at the C-terminus is essential for ATG8 proteins conjugation to phosphatidylethanolamine (PE) and insertion to membranes, which is necessary for autophagy. In addition to the protease activity, also mediates delipidation of ATG8 family proteins. Catalyzes delipidation of PE-conjugated forms of ATG8 proteins during macroautophagy. Also involved in non-canonical autophagy, a parallel pathway involving conjugation of ATG8 proteins to single membranes at endolysosomal compartments, by catalyzing delipidation of ATG8 proteins conjugated to phosphatidylserine (PS). This chain is Cysteine protease ATG4D, found in Xenopus laevis (African clawed frog).